The chain runs to 241 residues: tRNA pseudouridine synthase A (241 aa).

The active-site Nucleophile is the Asp51. Tyr110 is a binding site for substrate.

This sequence belongs to the tRNA pseudouridine synthase TruA family. Homodimer.

The enzyme catalyses uridine(38/39/40) in tRNA = pseudouridine(38/39/40) in tRNA. Its function is as follows. Formation of pseudouridine at positions 38, 39 and 40 in the anticodon stem and loop of transfer RNAs. This chain is tRNA pseudouridine synthase A, found in Campylobacter jejuni subsp. jejuni serotype O:23/36 (strain 81-176).